Here is a 137-residue protein sequence, read N- to C-terminus: Putative pre-16S rRNA nuclease (137 aa).

Belongs to the YqgF nuclease family.

It localises to the cytoplasm. Could be a nuclease involved in processing of the 5'-end of pre-16S rRNA. The polypeptide is Putative pre-16S rRNA nuclease (Anaeromyxobacter sp. (strain K)).